A 424-amino-acid chain; its full sequence is UDP-N-acetylglucosamine 1-carboxyvinyltransferase (424 aa).

22–23 is a phosphoenolpyruvate binding site; the sequence is KN. Arginine 93 contributes to the UDP-N-acetyl-alpha-D-glucosamine binding site. Cysteine 117 acts as the Proton donor in catalysis. At cysteine 117 the chain carries 2-(S-cysteinyl)pyruvic acid O-phosphothioketal. Residues 122–126, 162–165, aspartate 307, and isoleucine 329 each bind UDP-N-acetyl-alpha-D-glucosamine; these read RPVDL and KVSV.

This sequence belongs to the EPSP synthase family. MurA subfamily.

It is found in the cytoplasm. The catalysed reaction is phosphoenolpyruvate + UDP-N-acetyl-alpha-D-glucosamine = UDP-N-acetyl-3-O-(1-carboxyvinyl)-alpha-D-glucosamine + phosphate. Its pathway is cell wall biogenesis; peptidoglycan biosynthesis. Functionally, cell wall formation. Adds enolpyruvyl to UDP-N-acetylglucosamine. In Haemophilus influenzae (strain 86-028NP), this protein is UDP-N-acetylglucosamine 1-carboxyvinyltransferase.